Reading from the N-terminus, the 312-residue chain is Malate dehydrogenase (312 aa).

NAD(+)-binding positions include 7–13 (GAAGGIG) and Asp34. 2 residues coordinate substrate: Arg81 and Arg87. Residues Asn94 and 117-119 (ITN) contribute to the NAD(+) site. Asn119 and Arg153 together coordinate substrate. The active-site Proton acceptor is His177. Met227 contributes to the NAD(+) binding site.

It belongs to the LDH/MDH superfamily. MDH type 1 family. As to quaternary structure, homodimer.

It carries out the reaction (S)-malate + NAD(+) = oxaloacetate + NADH + H(+). Functionally, catalyzes the reversible oxidation of malate to oxaloacetate. This is Malate dehydrogenase from Escherichia coli (strain 55989 / EAEC).